A 1480-amino-acid chain; its full sequence is Nonribosomal peptide synthetase inpA (1480 aa).

The span at 1 to 17 shows a compositional bias: low complexity; sequence MSHSMSSSSSSSSSSSS. The disordered stretch occupies residues 1–24; sequence MSHSMSSSSSSSSSSSSSRDEGQS. A condensation region spans residues 44–458; sequence VQDVYPCTPL…QLISPQDLDQ (415 aa). The interval 479-871 is adenylation; sequence QRHIDTRPDA…GRKDSQVKIR (393 aa). The Carrier domain maps to 1003-1082; that stretch reads DSTNKVALRL…GLAAMITSPH (80 aa). S1041 carries the O-(pantetheine 4'-phosphoryl)serine modification. A thioesterase (TE) domain region spans residues 1117–1436; the sequence is KVFLTGATGL…VLAMLQDPQM (320 aa).

This sequence belongs to the NRP synthetase family.

It participates in secondary metabolite biosynthesis. Nonribosomal peptide synthetase; part of the inp gene cluster that mediates the biosynthesis of fellutamide B, a mycotoxin that acts as a proteasome inhibitor. In the first step of fellutabmide B biosynthesis, inpC activates 3-hydroxydodecanoic acid to generate 3-hydroxydodecanoyl-AMP that is then loaded onto the T0 domain of inpB. The 3-hydroxydodecanoyl-S-phosphopantetheinyl-T0 is sequentially extended with L-Asn and L-Gln by the two CAT modules of inpB. The linear lipodipeptide from inpB is then transferred onto inpA for the addition of the third amino acid, L-Leu. Reductive releasing of the lipotripeptide by the TE domain of inpA produces (2S)-fellutamide B. InpF might be involved in the release and transfer of the lipodipeptide from inpB to inpA. The inp cluster-encoded proteasome subunit inpE confers resistance to internally produced fellutamides. The MFS efflux transporter inpD may contribute to fellutamide resistance as well. The protein is Nonribosomal peptide synthetase inpA of Emericella nidulans (strain FGSC A4 / ATCC 38163 / CBS 112.46 / NRRL 194 / M139) (Aspergillus nidulans).